We begin with the raw amino-acid sequence, 486 residues long: L-arabinose isomerase (486 aa).

Residues Glu299, Glu324, His341, and His440 each contribute to the Mn(2+) site.

This sequence belongs to the arabinose isomerase family. Mn(2+) is required as a cofactor.

The catalysed reaction is beta-L-arabinopyranose = L-ribulose. It participates in carbohydrate degradation; L-arabinose degradation via L-ribulose; D-xylulose 5-phosphate from L-arabinose (bacterial route): step 1/3. Its function is as follows. Catalyzes the conversion of L-arabinose to L-ribulose. The chain is L-arabinose isomerase from Shouchella clausii (strain KSM-K16) (Alkalihalobacillus clausii).